The sequence spans 44 residues: Protein PsbN (44 aa).

Residues 7–29 traverse the membrane as a helical segment; sequence VATVFVSCLVLSITGYSLYIGFG.

The protein belongs to the PsbN family.

Its subcellular location is the plastid. The protein localises to the chloroplast thylakoid membrane. Functionally, may play a role in photosystem I and II biogenesis. In Nephroselmis olivacea (Green alga), this protein is Protein PsbN.